The chain runs to 242 residues: Carboxy-S-adenosyl-L-methionine synthase (242 aa).

Residues Y38, 63-65 (GCS), 88-89 (DN), 116-117 (DL), and R199 each bind S-adenosyl-L-methionine.

This sequence belongs to the class I-like SAM-binding methyltransferase superfamily. Cx-SAM synthase family. Homodimer.

It carries out the reaction prephenate + S-adenosyl-L-methionine = carboxy-S-adenosyl-L-methionine + 3-phenylpyruvate + H2O. Functionally, catalyzes the conversion of S-adenosyl-L-methionine (SAM) to carboxy-S-adenosyl-L-methionine (Cx-SAM). In Methylococcus capsulatus (strain ATCC 33009 / NCIMB 11132 / Bath), this protein is Carboxy-S-adenosyl-L-methionine synthase.